Here is a 189-residue protein sequence, read N- to C-terminus: Large ribosomal subunit protein bL9 (189 aa).

The protein belongs to the bacterial ribosomal protein bL9 family.

Functionally, binds to the 23S rRNA. In Brucella abortus (strain S19), this protein is Large ribosomal subunit protein bL9.